Here is a 320-residue protein sequence, read N- to C-terminus: Aspartate carbamoyltransferase catalytic subunit (320 aa).

Residues Arg68 and Thr69 each coordinate carbamoyl phosphate. Lys96 provides a ligand contact to L-aspartate. 3 residues coordinate carbamoyl phosphate: Arg118, His148, and Gln151. Positions 181 and 236 each coordinate L-aspartate. Residues Gly277 and Pro278 each contribute to the carbamoyl phosphate site.

This sequence belongs to the aspartate/ornithine carbamoyltransferase superfamily. ATCase family. As to quaternary structure, heterododecamer (2C3:3R2) of six catalytic PyrB chains organized as two trimers (C3), and six regulatory PyrI chains organized as three dimers (R2).

The catalysed reaction is carbamoyl phosphate + L-aspartate = N-carbamoyl-L-aspartate + phosphate + H(+). It participates in pyrimidine metabolism; UMP biosynthesis via de novo pathway; (S)-dihydroorotate from bicarbonate: step 2/3. Its function is as follows. Catalyzes the condensation of carbamoyl phosphate and aspartate to form carbamoyl aspartate and inorganic phosphate, the committed step in the de novo pyrimidine nucleotide biosynthesis pathway. This Paracidovorax citrulli (strain AAC00-1) (Acidovorax citrulli) protein is Aspartate carbamoyltransferase catalytic subunit.